We begin with the raw amino-acid sequence, 254 residues long: MKICLVDETGAGDGALSVLAARWGLEHDEQNLMALVMTPEHLELRKRDEPKLGGIFVDFADGAMAHRRKFGGGRGEAVAKAVGVKGSYLPDVVDATAGLGRDAFVLASVGCRVRMLERNPVVAALLDDGLARGYADPEIGAWLQERLQLIHASSLTALTDITPRPQVVYLDPMFPHKQKSALVKKEMRVFQSLVGPDLDADGLLEPARLLATKRVVVKRPDYAPPLADVATTNAVTTKGHRFDIYSGTAEVSAV.

Residues 101–102, 117–118, 153–154, and aspartate 171 contribute to the S-adenosyl-L-methionine site; these read RD, ER, and SS.

The protein belongs to the methyltransferase superfamily. RsmJ family.

The protein localises to the cytoplasm. The catalysed reaction is guanosine(1516) in 16S rRNA + S-adenosyl-L-methionine = N(2)-methylguanosine(1516) in 16S rRNA + S-adenosyl-L-homocysteine + H(+). Specifically methylates the guanosine in position 1516 of 16S rRNA. The polypeptide is Ribosomal RNA small subunit methyltransferase J (Enterobacter sp. (strain 638)).